A 949-amino-acid chain; its full sequence is Glycine dehydrogenase (decarboxylating) (949 aa).

Lys704 carries the N6-(pyridoxal phosphate)lysine modification.

It belongs to the GcvP family. The glycine cleavage system is composed of four proteins: P, T, L and H. Pyridoxal 5'-phosphate is required as a cofactor.

The catalysed reaction is N(6)-[(R)-lipoyl]-L-lysyl-[glycine-cleavage complex H protein] + glycine + H(+) = N(6)-[(R)-S(8)-aminomethyldihydrolipoyl]-L-lysyl-[glycine-cleavage complex H protein] + CO2. In terms of biological role, the glycine cleavage system catalyzes the degradation of glycine. The P protein binds the alpha-amino group of glycine through its pyridoxal phosphate cofactor; CO(2) is released and the remaining methylamine moiety is then transferred to the lipoamide cofactor of the H protein. The protein is Glycine dehydrogenase (decarboxylating) of Bacteroides fragilis (strain YCH46).